The following is a 363-amino-acid chain: 3-dehydroquinate synthase (363 aa).

NAD(+)-binding positions include 107–111 (GVIGD), 131–132 (TT), Lys-144, and Lys-153. Zn(2+)-binding residues include Glu-186, His-251, and His-268.

The protein belongs to the sugar phosphate cyclases superfamily. Dehydroquinate synthase family. It depends on Co(2+) as a cofactor. Zn(2+) serves as cofactor. NAD(+) is required as a cofactor.

The protein resides in the cytoplasm. It catalyses the reaction 7-phospho-2-dehydro-3-deoxy-D-arabino-heptonate = 3-dehydroquinate + phosphate. It participates in metabolic intermediate biosynthesis; chorismate biosynthesis; chorismate from D-erythrose 4-phosphate and phosphoenolpyruvate: step 2/7. Functionally, catalyzes the conversion of 3-deoxy-D-arabino-heptulosonate 7-phosphate (DAHP) to dehydroquinate (DHQ). The protein is 3-dehydroquinate synthase of Nostoc punctiforme (strain ATCC 29133 / PCC 73102).